The primary structure comprises 426 residues: Glutamate-1-semialdehyde 2,1-aminomutase (426 aa).

Lysine 265 carries the post-translational modification N6-(pyridoxal phosphate)lysine.

It belongs to the class-III pyridoxal-phosphate-dependent aminotransferase family. HemL subfamily. In terms of assembly, homodimer. It depends on pyridoxal 5'-phosphate as a cofactor.

The protein resides in the cytoplasm. It catalyses the reaction (S)-4-amino-5-oxopentanoate = 5-aminolevulinate. It functions in the pathway porphyrin-containing compound metabolism; protoporphyrin-IX biosynthesis; 5-aminolevulinate from L-glutamyl-tRNA(Glu): step 2/2. In Salmonella arizonae (strain ATCC BAA-731 / CDC346-86 / RSK2980), this protein is Glutamate-1-semialdehyde 2,1-aminomutase.